The following is a 301-amino-acid chain: Ribonuclease Z (301 aa).

Zn(2+) contacts are provided by H61, H63, D65, H66, H140, D211, and H269. D65 (proton acceptor) is an active-site residue.

The protein belongs to the RNase Z family. As to quaternary structure, homodimer. Zn(2+) is required as a cofactor.

The catalysed reaction is Endonucleolytic cleavage of RNA, removing extra 3' nucleotides from tRNA precursor, generating 3' termini of tRNAs. A 3'-hydroxy group is left at the tRNA terminus and a 5'-phosphoryl group is left at the trailer molecule.. Zinc phosphodiesterase, which displays some tRNA 3'-processing endonuclease activity. Probably involved in tRNA maturation, by removing a 3'-trailer from precursor tRNA. This is Ribonuclease Z from Bradyrhizobium diazoefficiens (strain JCM 10833 / BCRC 13528 / IAM 13628 / NBRC 14792 / USDA 110).